A 439-amino-acid polypeptide reads, in one-letter code: Microfibrillar-associated protein 1A (439 aa).

The tract at residues 1-200 (MSVPSALMKQ…SEDEMEPRLK (200 aa)) is disordered. Residue serine 2 is modified to N-acetylserine. Basic and acidic residues predominate over residues 23-34 (RNEKGEISMEKV). A phosphoserine mark is found at serine 52 and serine 53. A compositionally biased stretch (basic and acidic residues) spans 61–70 (QFIKKAKEQE). Residue lysine 67 forms a Glycyl lysine isopeptide (Lys-Gly) (interchain with G-Cter in SUMO2) linkage. Acidic residues predominate over residues 71–81 (AEPEEQEEDSS). Phosphoserine occurs at positions 94, 116, 118, 132, and 133. 2 stretches are compositionally biased toward acidic residues: residues 112-122 (VVGESDSEVEG) and 131-144 (DSSEEEEEEIDDEE). A compositionally biased stretch (basic and acidic residues) spans 145–163 (IERRRGMMRQRAQERKNEE). Positions 178 to 195 (ESESESEYEEYTDSEDEM) are enriched in acidic residues. A Glycyl lysine isopeptide (Lys-Gly) (interchain with G-Cter in SUMO2) cross-link involves residue lysine 249. At threonine 267 the chain carries Phosphothreonine. Lysine 357 participates in a covalent cross-link: Glycyl lysine isopeptide (Lys-Gly) (interchain with G-Cter in SUMO2). Serine 361 carries the post-translational modification Phosphoserine. Glycyl lysine isopeptide (Lys-Gly) (interchain with G-Cter in SUMO2) cross-links involve residues lysine 371, lysine 381, lysine 415, and lysine 418. Serine 432 is subject to Phosphoserine.

The protein belongs to the MFAP1 family. As to quaternary structure, component of the spliceosome B complex. Interacts with PRPF38A (via N-terminal interaction domain).

The protein resides in the nucleus. In terms of biological role, involved in pre-mRNA splicing as a component of the spliceosome. This Mus musculus (Mouse) protein is Microfibrillar-associated protein 1A.